Here is a 113-residue protein sequence, read N- to C-terminus: UPF0482 protein YnfB (113 aa).

The signal sequence occupies residues 1–28 (MKITLSKRIGLLAFLLPCALALSTTVHA).

The protein belongs to the UPF0482 family.

In Shigella flexneri serotype 5b (strain 8401), this protein is UPF0482 protein YnfB.